The primary structure comprises 58 residues: Single-pass membrane and coiled-coil domain-containing protein 4 homolog (58 aa).

A coiled-coil region spans residues M1–T31. A helical transmembrane segment spans residues T31–K51.

This sequence belongs to the SMCO4 family.

Its subcellular location is the membrane. In Drosophila melanogaster (Fruit fly), this protein is Single-pass membrane and coiled-coil domain-containing protein 4 homolog.